The chain runs to 309 residues: Pantothenate kinase (309 aa).

ATP is bound at residue 92-99 (GSVAVGKS).

The protein belongs to the prokaryotic pantothenate kinase family.

It is found in the cytoplasm. It catalyses the reaction (R)-pantothenate + ATP = (R)-4'-phosphopantothenate + ADP + H(+). It functions in the pathway cofactor biosynthesis; coenzyme A biosynthesis; CoA from (R)-pantothenate: step 1/5. The chain is Pantothenate kinase from Latilactobacillus sakei subsp. sakei (strain 23K) (Lactobacillus sakei subsp. sakei).